We begin with the raw amino-acid sequence, 120 residues long: Large ribosomal subunit protein bL12 (120 aa).

Belongs to the bacterial ribosomal protein bL12 family. In terms of assembly, homodimer. Part of the ribosomal stalk of the 50S ribosomal subunit. Forms a multimeric L10(L12)X complex, where L10 forms an elongated spine to which 2 to 4 L12 dimers bind in a sequential fashion. Binds GTP-bound translation factors.

Functionally, forms part of the ribosomal stalk which helps the ribosome interact with GTP-bound translation factors. Is thus essential for accurate translation. The chain is Large ribosomal subunit protein bL12 from Lactobacillus acidophilus (strain ATCC 700396 / NCK56 / N2 / NCFM).